Consider the following 490-residue polypeptide: MAQKLNLLNLAVPPVTHRSNFPSTFTFGVATSAYQIEGGWNEGKKGPSIWDKFTHIEGKILDGSNGDVAVDHYHRYKEDVDLIGQLGFGAYRFSISWSRIFPDGLGTEVNEEGIAFYNDLINTLLEKGIQPYVTLYHWDLPSHLQEAIGGWTNRKIVDYFGLYADACFANFGDRVKHWITLNEPLQTSVNGHCIGIFAPGRNEKPLIEPYLVSHHQVLAHATAVSIYRSKYKESQGGQIGLSVDCEWAEPNSEKPEDKVAADRRIDFQLGWFLDPLFFGDYPASMRQKLGDNLPRFTPEEKEFMLQNSWDFLGLNHYTSRLISHVSNKEAESNFYQAQELERIVELENGDLIGERAASDWLYAVPWGIRKTLNYMSKKYNHPPIFITENGMDDEDDGSASIHDMLDDKRRVDYFKSYLANVSQAIEDGVDIKGYFAWSLLDNFEWAQGYTKRFGLVYVDYKNGLTRHPKSSAYWFMKFLKGDEENKGKKE.

Residues glutamine 35, histidine 137, asparagine 182–glutamate 183, tyrosine 317, and glutamate 388 each bind a beta-D-glucoside. Glutamate 183 acts as the Proton donor in catalysis. The active-site Nucleophile is the glutamate 388. Residue asparagine 420 is glycosylated (N-linked (GlcNAc...) asparagine). Residues tryptophan 437, glutamate 444–tryptophan 445, and phenylalanine 453 each bind a beta-D-glucoside.

It belongs to the glycosyl hydrolase 1 family. In terms of tissue distribution, expressed at low levels predominantly in root epidermal cells.

It carries out the reaction Hydrolysis of terminal, non-reducing beta-D-glucosyl residues with release of beta-D-glucose.. Functionally, glucosidase that hydrolyzes scopolin and various beta-glucosides, cellooligosaccharides (mainly cellotriose) and laminarioligosaccharides. Can use p-nitrophenyl-beta-glucosides (pNP beta-Glc) and p-nitrophenyl-beta-D-fucosides (pNP beta-D-Fuc) as substrates, and, to a lower extent, beta-galactosides, beta-mannosides and beta-xylosides. Involved in the secretion of root-derived phenolics upon iron ions (Fe) depletion. Promotes disease resistance toward B.cinerea, H.arabidopsidis and P.syringae pv. tomato DC3000. Required during rhizobacteria-mediated (e.g. P.fluorescens WCS417r) broad-spectrum induced systemic resistance (ISR) against several pathogens. The sequence is that of Beta-glucosidase 42 from Arabidopsis thaliana (Mouse-ear cress).